We begin with the raw amino-acid sequence, 278 residues long: Trehalose monomycolate transport factor A (278 aa).

M1 is a topological domain (periplasmic). Residues V2 to V22 form a helical membrane-spanning segment. Over D23–R278 the chain is Cytoplasmic. Positions P200–R278 are disordered. The segment covering N269–R278 has biased composition (basic and acidic residues).

As to quaternary structure, monomer. Interacts (via N-terminus) with MmpL3; active trehalose monomycolate (TMM) biosynthesis is not required for the complex formation. Interacts with MSMEG_5308.

It is found in the cell inner membrane. It localises to the cell septum. Its subcellular location is the cell tip. In terms of biological role, required for MmpL3-dependent trehalose monomycolate (TMM) transport to the cell wall. Required for growth and cell elongation. In Mycolicibacterium smegmatis (strain ATCC 700084 / mc(2)155) (Mycobacterium smegmatis), this protein is Trehalose monomycolate transport factor A.